We begin with the raw amino-acid sequence, 374 residues long: Ribonuclease D (374 aa).

The 3'-5' exonuclease domain maps to 3 to 171 (YQLITTDDGL…MAIRLVEETT (169 aa)). The HRDC domain occupies 210-289 (KGRHLACLQK…AETQTMDAAE (80 aa)).

Belongs to the RNase D family. A divalent metal cation is required as a cofactor.

It is found in the cytoplasm. It catalyses the reaction Exonucleolytic cleavage that removes extra residues from the 3'-terminus of tRNA to produce 5'-mononucleotides.. Functionally, exonuclease involved in the 3' processing of various precursor tRNAs. Initiates hydrolysis at the 3'-terminus of an RNA molecule and releases 5'-mononucleotides. The sequence is that of Ribonuclease D from Musicola paradisiaca (strain Ech703) (Dickeya paradisiaca).